A 354-amino-acid chain; its full sequence is Peptide chain release factor 1 (354 aa).

The residue at position 231 (glutamine 231) is an N5-methylglutamine.

The protein belongs to the prokaryotic/mitochondrial release factor family. Methylated by PrmC. Methylation increases the termination efficiency of RF1.

The protein localises to the cytoplasm. In terms of biological role, peptide chain release factor 1 directs the termination of translation in response to the peptide chain termination codons UAG and UAA. In Acholeplasma laidlawii (strain PG-8A), this protein is Peptide chain release factor 1.